The following is a 247-amino-acid chain: DNA polymerase sliding clamp 1 (247 aa).

Belongs to the PCNA family. Homotrimer. The subunits circularize to form a toroid; DNA passes through its center. Replication factor C (RFC) is required to load the toroid on the DNA.

Functionally, sliding clamp subunit that acts as a moving platform for DNA processing. Responsible for tethering the catalytic subunit of DNA polymerase and other proteins to DNA during high-speed replication. The protein is DNA polymerase sliding clamp 1 of Sulfolobus acidocaldarius (strain ATCC 33909 / DSM 639 / JCM 8929 / NBRC 15157 / NCIMB 11770).